The primary structure comprises 940 residues: MAFNKLESSNNQEIISEEVGILKELLDDATRGMAGEQGLTTIQHLVELYDEGDYEALTQAISEMTNDDMVVASRYFSLLPLLINISEDVDLAYEVNRKNNIDESYLGKLSETFDVVAESDNARDILENVNVVPVLTAHPTQVQRKTMLELTNHIHELLRKHRDVKDGLINKDKWYADLRRYVEIMMKTDIIREKKLKVKNEITNVMEYYNSSLIKAITKLSHEFKRLAVEKGIELDNPTPITMGMWIGGDRDGNPFVTAETLKLSATLQSEVILNYYIEKVDNLYRSFSLSSRLTEVSETVAEMAKLSPDTSVYRENEPYRRAFSYIQSKLIQTLLFFKAGNFSKERAAKRLSENVRLGSVSTGEVVADFVHDRLSQSLQAVSQQTTEFYETAEAFHDDLLAIKNSLLENDDSVLISGDFEELLQAVEVFGFYLATIDMRQDSSVHEACVAELLKSANIVDNYSELTEVEKVAVLLKELQEDPRTLSSTNVSKSETLEKELAIFRTARLLKDYLGEEVIKQHIISHTESVSDMFELAILLKEVGLVDTERARVQIVPLFETIEDLENSNEIMKQYLGYDIVKRWIKNSNNYQEIMLGYSDSNKDGGYLSSGWTLYKAQNELTNIGEERGIKITFFHGRGGTVGRGGGPSYDAITSQPFGTIKDRIRLTEQGEVIGNKYGNKDAAYYNLEMLVSATLDRMVTRQITDPDELVDFREIMDSIVQDSNRIYRDLVFGNEHFYDYFFEASPIKEVSSLNIGSRPAARKTITDISGLRAIPWVFSWSQNRIMLPGWYGVGSAFNHYIEAEEGNLEKLQHMFETWPFFRSLLSNVDMVLSKSDMNIAFHYAQLAESEEVRSVFNIILDEWQLTKNVILAIEKHDDFLEESPSLKASLGFRLPYFNVLNYIQIELIKRLRNNNLTDDEISLIHITINGIATGLRNSG.

Residues H138 and K603 contribute to the active site.

It belongs to the PEPCase type 1 family. Mg(2+) serves as cofactor.

It carries out the reaction oxaloacetate + phosphate = phosphoenolpyruvate + hydrogencarbonate. Functionally, forms oxaloacetate, a four-carbon dicarboxylic acid source for the tricarboxylic acid cycle. The polypeptide is Phosphoenolpyruvate carboxylase (Streptococcus thermophilus (strain ATCC BAA-250 / LMG 18311)).